The sequence spans 403 residues: Nodal homolog (403 aa).

The signal sequence occupies residues 1–18 (MAFLTAVLCFGFACMVQG). A propeptide spanning residues 19-278 (VPSWLESRIP…RMPGIRRHRR (260 aa)) is cleaved from the precursor. Asn68, Asn133, and Asn169 each carry an N-linked (GlcNAc...) asparagine glycan. The disordered stretch occupies residues 195–220 (AERGSGMSSAEFLDSPGDSPQYNPHH). 3 cysteine pairs are disulfide-bonded: Cys303–Cys369, Cys332–Cys400, and Cys336–Cys402. Residue Asn341 is glycosylated (N-linked (GlcNAc...) asparagine).

The protein belongs to the TGF-beta family. Homodimer; disulfide-linked. Interacts with, and is inhibited by cer1 and gdf10/bmp3b.

The protein localises to the secreted. Cooperation and regulatory loops of multiple nodals are essential for mesendoderm patterning in early embryos. Essential for mesoderm formation and axial patterning during embryonic development. Activates the activin-like signaling pathway to induce dorsal and ventral mesoderm in animal cap ectoderm. In addition, also dorsalizes ventral marginal zone (VMZ) tissues during gastrulation. Acts in a downstream signaling cascade via cripto and cer1 to mediate cardiogenesis in embryonic mesoderm. Directs the orientation of the left-right axis by driving the left-specific gene cascade in the left lateral plate mesoderm. The chain is Nodal homolog from Xenopus tropicalis (Western clawed frog).